Consider the following 256-residue polypeptide: Protein RKD4 (256 aa).

The 87-residue stretch at 130-216 (EKVTVKKKRN…MEEEVKNLEE (87 aa)) folds into the RWP-RK domain. Residues 190 to 224 (RKLKSLNSLIKNLKNVGMEEEVKNLEEHRFLIEQE) are a coiled coil.

The protein localises to the nucleus. In terms of biological role, putative transcription factor. This is Protein RKD4 (RKD4) from Arabidopsis thaliana (Mouse-ear cress).